A 489-amino-acid chain; its full sequence is N-succinylglutamate 5-semialdehyde dehydrogenase (489 aa).

An NAD(+)-binding site is contributed by 221–226 (GSSGTG). Residues E244 and C278 contribute to the active site.

The protein belongs to the aldehyde dehydrogenase family. AstD subfamily.

The enzyme catalyses N-succinyl-L-glutamate 5-semialdehyde + NAD(+) + H2O = N-succinyl-L-glutamate + NADH + 2 H(+). It participates in amino-acid degradation; L-arginine degradation via AST pathway; L-glutamate and succinate from L-arginine: step 4/5. In terms of biological role, catalyzes the NAD-dependent reduction of succinylglutamate semialdehyde into succinylglutamate. This Sorangium cellulosum (strain So ce56) (Polyangium cellulosum (strain So ce56)) protein is N-succinylglutamate 5-semialdehyde dehydrogenase.